An 85-amino-acid chain; its full sequence is U4-theraphotoxin-Hhn1p (85 aa).

A signal peptide spans 1–22 (MKMTLIAIPTCAAVLVLHTTAA). Residues 23–48 (EELEAESQLMEVGMPDTELEAVDGER) constitute a propeptide that is removed on maturation. Cystine bridges form between C52–C66, C56–C77, and C71–C82.

This sequence belongs to the neurotoxin 12 (Hwtx-2) family. 02 (Hwtx-2) subfamily. In terms of tissue distribution, expressed by the venom gland.

It localises to the secreted. Its function is as follows. Postsynaptic neurotoxin. The protein is U4-theraphotoxin-Hhn1p of Cyriopagopus hainanus (Chinese bird spider).